The chain runs to 368 residues: Cytoskeleton protein RodZ (368 aa).

Residues 1–111 (MNTEASQDQT…LGKKHKKRDG (111 aa)) are Cytoplasmic-facing. One can recognise an HTH cro/C1-type domain in the interval 19-79 (LRQARESLGL…KLVHLPEDEL (61 aa)). The H-T-H motif DNA-binding region spans 30–49 (QQTVAERLCLKVSTIRDIEE). The chain crosses the membrane as a helical; Signal-anchor for type II membrane protein span at residues 112 to 132 (WLMSFTWLIVLVVLGLTGAWW). Topologically, residues 133–368 (WQNHQAQQAE…RVARLTVGVE (236 aa)) are periplasmic. Residues 151 to 243 (SAQLSQNGGQ…STEPVDTANT (93 aa)) form a disordered region. The span at 193-221 (STSAVTNSATTSSATTSSVPTTSSVPKTT) shows a compositional bias: low complexity. Residues 229–243 (VPKTNSTEPVDTANT) show a composition bias toward polar residues.

The protein belongs to the RodZ family.

It localises to the cell inner membrane. Its function is as follows. Cytoskeletal protein that is involved in cell-shape control through regulation of the length of the long axis. The chain is Cytoskeleton protein RodZ from Yersinia pseudotuberculosis serotype O:3 (strain YPIII).